A 63-amino-acid chain; its full sequence is Large ribosomal subunit protein eL37 (63 aa).

Residues cysteine 20, cysteine 23, cysteine 35, and cysteine 38 each contribute to the Zn(2+) site. A C4-type zinc finger spans residues 20–38; the sequence is CRRCGRRAFNVKKGYCAAC.

This sequence belongs to the eukaryotic ribosomal protein eL37 family. Zn(2+) serves as cofactor.

Functionally, binds to the 23S rRNA. This chain is Large ribosomal subunit protein eL37, found in Thermococcus gammatolerans (strain DSM 15229 / JCM 11827 / EJ3).